Consider the following 359-residue polypeptide: Peptide chain release factor 1 (359 aa).

An N5-methylglutamine modification is found at Q234.

Belongs to the prokaryotic/mitochondrial release factor family. Methylated by PrmC. Methylation increases the termination efficiency of RF1.

The protein localises to the cytoplasm. In terms of biological role, peptide chain release factor 1 directs the termination of translation in response to the peptide chain termination codons UAG and UAA. The protein is Peptide chain release factor 1 of Clavibacter michiganensis subsp. michiganensis (strain NCPPB 382).